A 1409-amino-acid chain; its full sequence is CRISPR-associated endonuclease Cas9 (1409 aa).

The active-site For RuvC-like nuclease domain is Asp31. Mg(2+) is bound by residues Asp31, Glu784, and Glu788. The HNH Cas9-type domain occupies 792–949; it reads TNQGKSNSQQ…DKAGFIQRQL (158 aa). Residue His868 is the Proton acceptor for HNH nuclease domain of the active site. His1011 provides a ligand contact to Mg(2+). A compositionally biased stretch (basic and acidic residues) spans 1121 to 1130; sequence EQNHGLDRGK. The segment at 1121 to 1151 is disordered; sequence EQNHGLDRGKPKGLFNANLSSKPKPNSNENL. Positions 1137–1150 are enriched in polar residues; it reads ANLSSKPKPNSNEN.

It belongs to the CRISPR-associated protein Cas9 family. Subtype II-A subfamily. In terms of assembly, monomer. Binds crRNA and tracrRNA. It depends on Mg(2+) as a cofactor.

Only has nuclease activity when bound to both gRNAs (crRNA plus tracrRNA). CRISPR (clustered regularly interspaced short palindromic repeat) is an adaptive immune system that provides protection against mobile genetic elements (viruses, transposable elements and conjugative plasmids). CRISPR clusters contain spacers, sequences complementary to antecedent mobile elements, and target invading nucleic acids. CRISPR clusters are transcribed and processed into CRISPR RNA (crRNA). In type II CRISPR systems correct processing of pre-crRNA requires a trans-encoded small RNA (tracrRNA), endogenous ribonuclease 3 (rnc) and Cas9. The tracrRNA serves as a guide for ribonuclease 3-aided processing of pre-crRNA. Cas9/crRNA/tracrRNA endonucleolytically cleaves linear or circular dsDNA target complementary to the spacer yielding blunt ends; Cas9 is inactive in the absence of the 2 guide RNAs (gRNA). Cas9 recognizes a 3'-G-rich protospacer adjacent motif (PAM, TGGTG in this organism) in the CRISPR repeat sequences to help distinguish self versus nonself, as targets within the bacterial CRISPR locus do not have PAMs. PAM recognition is also required for catalytic activity. When the CRISPR3/cas system consisting of cas9-cas1-cas2-csn2-CRISPR3 or just cas9-CRISPR3 is expressed in E.coli it prevents plasmids homologous to spacers 1 or 2 from transforming. The protein is CRISPR-associated endonuclease Cas9 of Streptococcus thermophilus.